The sequence spans 892 residues: Translation initiation factor IF-2 (892 aa).

Residues 66 to 305 are disordered; that stretch reads TRSTLNIPGT…SLQQGFQKPA (240 aa). The segment covering 68–82 has biased composition (polar residues); that stretch reads STLNIPGTGGKSKSV. Basic and acidic residues-rich tracts occupy residues 93 to 159 and 166 to 216; these read VKRD…KDKV and DMTK…EENK. The segment covering 254–269 has biased composition (basic residues); sequence GRGRNAKAARPAKKGK. Over residues 270 to 282 the composition is skewed to basic and acidic residues; that stretch reads HAESKADREEARA. A tr-type G domain is found at 391 to 560; the sequence is PRAPVVTIMG…LLQAEVLELK (170 aa). The interval 400–407 is G1; it reads GHVDHGKT. A GTP-binding site is contributed by 400 to 407; it reads GHVDHGKT. Residues 425 to 429 form a G2 region; the sequence is GITQH. The interval 446–449 is G3; it reads DTPG. Residues 446 to 450 and 500 to 503 contribute to the GTP site; these read DTPGH and NKID. Residues 500-503 form a G4 region; that stretch reads NKID. A G5 region spans residues 536 to 538; sequence SAK.

This sequence belongs to the TRAFAC class translation factor GTPase superfamily. Classic translation factor GTPase family. IF-2 subfamily.

The protein resides in the cytoplasm. In terms of biological role, one of the essential components for the initiation of protein synthesis. Protects formylmethionyl-tRNA from spontaneous hydrolysis and promotes its binding to the 30S ribosomal subunits. Also involved in the hydrolysis of GTP during the formation of the 70S ribosomal complex. This is Translation initiation factor IF-2 from Salmonella typhi.